We begin with the raw amino-acid sequence, 886 residues long: Peptidyl-lysine N-acetyltransferase PatZ (886 aa).

Residues 487 to 523 (QPILQAYGMNTLPTWIASDSTEAVHIAEQIGYPVALK) enclose the ATP-grasp domain. The N-acetyltransferase domain occupies 726-881 (CLFRPILPED…GIVGLTLNLA (156 aa)).

It in the N-terminal section; belongs to the acetate CoA ligase alpha subunit family. In the central section; belongs to the acetate CoA ligase beta subunit family. As to quaternary structure, stable tetramer in solution. Oligomerizes to an octameric form by autoacetylation. In terms of processing, autoacetylated. Deacetylated by CobB.

The enzyme catalyses L-lysyl-[protein] + acetyl-CoA = N(6)-acetyl-L-lysyl-[protein] + CoA + H(+). In terms of biological role, catalyzes the acetyl-CoA-dependent acetylation of lysine residues of a large number of target proteins. Acetylates RNase R in exponential phase cells and RNase II. Required for the glucose-dependent acetylation on multiple lysines of alpha, beta and beta' RNAP subunits. Also acetylates acetyl-coenzyme A synthetase (Acs) and the chromosomal replication initiator protein DnaA, and inhibits their activity. Overexpression leads to the acetylation of a large number of additional proteins and inhibits motility. The chain is Peptidyl-lysine N-acetyltransferase PatZ from Escherichia coli (strain K12).